Reading from the N-terminus, the 402-residue chain is Alanine racemase (402 aa).

K34 (proton acceptor; specific for D-alanine) is an active-site residue. K34 bears the N6-(pyridoxal phosphate)lysine mark. R133 contacts substrate. The RPE1 insert domain occupies 226–271 (EVSYNLSYKEKFERNTPALATTVCINKCADVNTRLTYKVPLKGSYR). Y296 (proton acceptor; specific for L-alanine) is an active-site residue. Residue M344 participates in substrate binding.

It belongs to the alanine racemase family. Pyridoxal 5'-phosphate serves as cofactor.

The catalysed reaction is L-alanine = D-alanine. It functions in the pathway amino-acid biosynthesis; D-alanine biosynthesis; D-alanine from L-alanine: step 1/1. Catalyzes the interconversion of L-alanine and D-alanine. May also act on other amino acids. This Rickettsia typhi (strain ATCC VR-144 / Wilmington) protein is Alanine racemase (alr).